The primary structure comprises 465 residues: MANTFNPEEDFPEVYKVCKLFNPSIDDLEKIKNAMDREITMGLSRDHHDRSTVPCHLSYVQDLPTGRERGQFLALEMMPTNCRIMLVKFSSERDIYTSSKCVIMPHTVAAGRGTEVFTFLATSIANFVKEKKVDKDNLPLGIAFAFTLKKLALDVGILVSWTKEFGAQGAIGKDVVQLLRDALAKFPEISVDVMGIINVGAGSLLALCWAQPDTRIGLIMGSIANSCYVERVERCETYEGDEYRKLMIINSDWAHFGDTGQLDFIRNEYDRQLDTESINPGTRIYEKFSGALCMGELVRIIVLRLMKSGAIFAEDRRDYIGIQWKLDMVSLIEIVSDPPGVYTKAQEVMDKFRIRHCKERDLAALKYICDTVTNRAAMLVASGVSCLIDRMRLPQISIAVDGGIYRLHPTFSTVLNKYTRLLADPNYNFEFVITQDSCGVGAAIMAGMAHANKYKTDAKLFTMDY.

The Hexokinase domain occupies glutamate 8–glycine 447. Residues threonine 65–isoleucine 197 form a hexokinase small subdomain region. Lysine 88 is a binding site for ATP. A glucose-binding region spans residues proline 139–phenylalanine 165. Residues asparagine 198 to aspartate 436 are hexokinase large subdomain.

The protein belongs to the hexokinase family.

The enzyme catalyses a D-hexose + ATP = a D-hexose 6-phosphate + ADP + H(+). It catalyses the reaction D-mannose + ATP = D-mannose 6-phosphate + ADP + H(+). The catalysed reaction is D-fructose + ATP = D-fructose 6-phosphate + ADP + H(+). It carries out the reaction D-glucose + ATP = D-glucose 6-phosphate + ADP + H(+). It participates in carbohydrate metabolism; hexose metabolism. It functions in the pathway carbohydrate degradation; glycolysis; D-glyceraldehyde 3-phosphate and glycerone phosphate from D-glucose: step 1/4. Functionally, catalyzes the phosphorylation of various hexoses to hexose 6-phosphate. The polypeptide is Hexokinase type 1 (Hex-t1) (Drosophila melanogaster (Fruit fly)).